A 262-amino-acid chain; its full sequence is Glutamate racemase (262 aa).

Residues 5–6 (DS) and 37–38 (YG) each bind substrate. Catalysis depends on Cys69, which acts as the Proton donor/acceptor. 70 to 71 (NT) is a binding site for substrate. The active-site Proton donor/acceptor is Cys181. Residue 182–183 (TH) coordinates substrate.

Belongs to the aspartate/glutamate racemases family.

It carries out the reaction L-glutamate = D-glutamate. The protein operates within cell wall biogenesis; peptidoglycan biosynthesis. In terms of biological role, provides the (R)-glutamate required for cell wall biosynthesis. The chain is Glutamate racemase from Buchnera aphidicola subsp. Acyrthosiphon pisum (strain Tuc7).